The sequence spans 329 residues: CDP-diacylglycerol--glycerol-3-phosphate 3-phosphatidyltransferase 1, chloroplastic (329 aa).

The transit peptide at M1–A38 directs the protein to the chloroplast. 4 helical membrane passes run P150–L170, V190–A210, L217–V237, and I300–I320.

It belongs to the CDP-alcohol phosphatidyltransferase class-I family. It depends on Mn(2+) as a cofactor.

The protein resides in the plastid. Its subcellular location is the chloroplast membrane. It carries out the reaction a CDP-1,2-diacyl-sn-glycerol + sn-glycerol 3-phosphate = a 1,2-diacyl-sn-glycero-3-phospho-(1'-sn-glycero-3'-phosphate) + CMP + H(+). It functions in the pathway phospholipid metabolism; phosphatidylglycerol biosynthesis; phosphatidylglycerol from CDP-diacylglycerol: step 1/2. Functionally, catalyzes the committed step to the synthesis of the acidic phospholipids. Transfers specifically a phosphatidyl group from CDP-diacylglycerol to glycerol-3-phosphate to form phosphatidylglycerophosphate. The polypeptide is CDP-diacylglycerol--glycerol-3-phosphate 3-phosphatidyltransferase 1, chloroplastic (Oryza sativa subsp. japonica (Rice)).